Reading from the N-terminus, the 521-residue chain is Vang-like protein 2 (521 aa).

Residues 1–81 form a disordered region; it reads MDTESQYSGY…TTVVTGTSEH (81 aa). Topologically, residues 1–108 are cytoplasmic; the sequence is MDTESQYSGY…VPLDCSRHLG (108 aa). A compositionally biased stretch (basic residues) spans 15–33; it reads GHSRSSRKHRDRRDRHRSK. A compositionally biased stretch (basic and acidic residues) spans 57-67; sequence ESTRGDERDDN. Low complexity predominate over residues 69–81; sequence GETTTVVTGTSEH. Residues 109–129 traverse the membrane as a helical segment; the sequence is VAAGAILALLSFLTPLAFLLL. Residues 130 to 147 are Extracellular-facing; that stretch reads PPLLWREELEPCGTACEG. The helical transmembrane segment at 148 to 168 threads the bilayer; the sequence is LFISVAFKLLILLLGSWALFF. Topologically, residues 169–178 are cytoplasmic; that stretch reads RRPKASLPRV. A helical transmembrane segment spans residues 179 to 199; it reads FVLRALLMVLVFLLVISYWLF. The Extracellular segment spans residues 200 to 217; that stretch reads YGVRILDARERSYQGVVQ. Residues 218–238 form a helical membrane-spanning segment; it reads FAVSLVDALLFVHYLAVVLLE. At 239–521 the chain is on the cytoplasmic side; that stretch reads LRQLQPQFTL…VMRLQSETSV (283 aa).

This sequence belongs to the Vang family. In terms of assembly, homodimer and heterodimer with Vangl1. Interacts through its C-terminal region with the N-terminal half of DVL1, DVL2 and DVL3. The PDZ domain of DVL1, DVL2 and DVL3 is required for the interaction. Variants Glu-255 and Asn-464 impair interaction with the DVL proteins. Also interacts with the PDZ domains of MAGI3, SCRIB/SCRB1 and FZD3. Interacts with PRICKLE3. In terms of tissue distribution, primarily expressed in the brain and epididymis. Not detected in the cochlea of Lp mice.

The protein resides in the cell membrane. In terms of biological role, involved in the control of early morphogenesis and patterning of both axial midline structures and the development of neural plate. Plays a role in the regulation of planar cell polarity, particularly in the orientation of stereociliary bundles in the cochlea. Required for polarization and movement of myocardializing cells in the outflow tract and seems to act via RHOA signaling to regulate this process. Required for cell surface localization of FZD3 and FZD6 in the inner ear. This chain is Vang-like protein 2 (Vangl2), found in Mus musculus (Mouse).